The primary structure comprises 414 residues: Imidazolonepropionase (414 aa).

Fe(3+) contacts are provided by H77 and H79. 2 residues coordinate Zn(2+): H77 and H79. 3 residues coordinate 4-imidazolone-5-propanoate: R86, Y149, and H184. Y149 provides a ligand contact to N-formimidoyl-L-glutamate. Position 249 (H249) interacts with Fe(3+). Residue H249 coordinates Zn(2+). A 4-imidazolone-5-propanoate-binding site is contributed by E252. D323 is a binding site for Fe(3+). D323 serves as a coordination point for Zn(2+). 2 residues coordinate N-formimidoyl-L-glutamate: N325 and G327. A 4-imidazolone-5-propanoate-binding site is contributed by S328.

This sequence belongs to the metallo-dependent hydrolases superfamily. HutI family. Requires Zn(2+) as cofactor. Fe(3+) is required as a cofactor.

The protein resides in the cytoplasm. The enzyme catalyses 4-imidazolone-5-propanoate + H2O = N-formimidoyl-L-glutamate. It participates in amino-acid degradation; L-histidine degradation into L-glutamate; N-formimidoyl-L-glutamate from L-histidine: step 3/3. Functionally, catalyzes the hydrolytic cleavage of the carbon-nitrogen bond in imidazolone-5-propanoate to yield N-formimidoyl-L-glutamate. It is the third step in the universal histidine degradation pathway. The sequence is that of Imidazolonepropionase from Phocaeicola vulgatus (strain ATCC 8482 / DSM 1447 / JCM 5826 / CCUG 4940 / NBRC 14291 / NCTC 11154) (Bacteroides vulgatus).